A 190-amino-acid polypeptide reads, in one-letter code: Potassium-transporting ATPase KdpC subunit (190 aa).

The helical transmembrane segment at 10–30 (TFLFLLLITGGVYPLLTTALG) threads the bilayer.

Belongs to the KdpC family. The system is composed of three essential subunits: KdpA, KdpB and KdpC.

It is found in the cell inner membrane. In terms of biological role, part of the high-affinity ATP-driven potassium transport (or Kdp) system, which catalyzes the hydrolysis of ATP coupled with the electrogenic transport of potassium into the cytoplasm. This subunit acts as a catalytic chaperone that increases the ATP-binding affinity of the ATP-hydrolyzing subunit KdpB by the formation of a transient KdpB/KdpC/ATP ternary complex. This is Potassium-transporting ATPase KdpC subunit from Escherichia fergusonii (strain ATCC 35469 / DSM 13698 / CCUG 18766 / IAM 14443 / JCM 21226 / LMG 7866 / NBRC 102419 / NCTC 12128 / CDC 0568-73).